The primary structure comprises 177 residues: Small ribosomal subunit protein eS10z (177 aa).

The interval 90–177 (TLKKSAKPGG…AAAPSGSGFP (88 aa)) is disordered. Over residues 108 to 140 (DRQRGPPRSDGDRPRFGDRDGYRGGPRGGDEKG) the composition is skewed to basic and acidic residues. The segment covering 141-150 (GAPADFQPSF) has biased composition (low complexity). A compositionally biased stretch (gly residues) spans 151 to 165 (QGGGGRPGFGRGAGG). Positions 166 to 177 (YSAAAPSGSGFP) are enriched in low complexity.

Belongs to the eukaryotic ribosomal protein eS10 family.

It localises to the cytoplasm. The protein is Small ribosomal subunit protein eS10z (RPS10A) of Arabidopsis thaliana (Mouse-ear cress).